The primary structure comprises 394 residues: Keratin, type I cuticular Ha4 (394 aa).

The head stretch occupies residues 1 to 56; sequence MSYSCCLPSLGCRTSCSSRPCVPPSCHGYTLPGACNIPANVSNCNWFCEGSFNGSE. One can recognise an IF rod domain in the interval 56 to 367; it reads EKETMQFLND…SLLESEDCKL (312 aa). The segment at 57–91 is coil 1A; that stretch reads KETMQFLNDRLASYLEKVRQLERDNAELEKLIQER. The tract at residues 92-102 is linker 1; sequence SQQQEPLLCPS. The segment at 103-203 is coil 1B; it reads YQSYFKTIEE…HEEEVNTLRS (101 aa). Residues 204–219 form a linker 12 region; that stretch reads QLGDRLNVEVDTAPTV. A coil 2 region spans residues 220-363; sequence DLNQVLNETR…NTYRSLLESE (144 aa). Positions 364 to 394 are tail; that stretch reads DCKLPCNPCATTNASGNSCGPCGTSQKGCCN.

This sequence belongs to the intermediate filament family. As to expression, expressed in the hair follicles.

In Homo sapiens (Human), this protein is Keratin, type I cuticular Ha4 (KRT34).